Here is a 307-residue protein sequence, read N- to C-terminus: 3-methyl-2-oxobutanoate hydroxymethyltransferase (307 aa).

Mg(2+) is bound by residues aspartate 61 and aspartate 100. 3-methyl-2-oxobutanoate is bound by residues 61–62 (DS), aspartate 100, and lysine 130. Glutamate 132 is a binding site for Mg(2+). Glutamate 199 acts as the Proton acceptor in catalysis.

This sequence belongs to the PanB family. In terms of assembly, homodecamer; pentamer of dimers. It depends on Mg(2+) as a cofactor.

Its subcellular location is the cytoplasm. It catalyses the reaction 3-methyl-2-oxobutanoate + (6R)-5,10-methylene-5,6,7,8-tetrahydrofolate + H2O = 2-dehydropantoate + (6S)-5,6,7,8-tetrahydrofolate. Its pathway is cofactor biosynthesis; (R)-pantothenate biosynthesis; (R)-pantoate from 3-methyl-2-oxobutanoate: step 1/2. Its function is as follows. Catalyzes the reversible reaction in which hydroxymethyl group from 5,10-methylenetetrahydrofolate is transferred onto alpha-ketoisovalerate to form ketopantoate. In Nitratidesulfovibrio vulgaris (strain ATCC 29579 / DSM 644 / CCUG 34227 / NCIMB 8303 / VKM B-1760 / Hildenborough) (Desulfovibrio vulgaris), this protein is 3-methyl-2-oxobutanoate hydroxymethyltransferase.